We begin with the raw amino-acid sequence, 84 residues long: Large ribosomal subunit protein bL27 (84 aa).

Residues 1-25 form a disordered region; that stretch reads MSHKKAGGSTRNGRDSNAQRRGVKK.

It belongs to the bacterial ribosomal protein bL27 family.

This Desulforapulum autotrophicum (strain ATCC 43914 / DSM 3382 / VKM B-1955 / HRM2) (Desulfobacterium autotrophicum) protein is Large ribosomal subunit protein bL27.